Consider the following 302-residue polypeptide: Acetaldehyde dehydrogenase (302 aa).

12–15 serves as a coordination point for NAD(+); that stretch reads SGNI. Residue C127 is the Acyl-thioester intermediate of the active site. NAD(+) is bound by residues 158 to 166 and N276; that span reads SAGPGTRQN.

Belongs to the acetaldehyde dehydrogenase family.

The catalysed reaction is acetaldehyde + NAD(+) + CoA = acetyl-CoA + NADH + H(+). The polypeptide is Acetaldehyde dehydrogenase (nahO) (Geobacillus genomosp. 3).